The following is a 507-amino-acid chain: DNA nucleotidylexotransferase (507 aa).

The Nuclear localization signal signature appears at 11–17 (PLRKKAK). Residues 27–124 (QHNVKFKEIV…RPVEIQNRHL (98 aa)) enclose the BRCT domain. Residues 254–258 (VGLKT) are involved in DNA binding. A 2'-deoxyribonucleoside 5'-triphosphate contacts are provided by residues 329–334 (GFRRGK) and 338–341 (HDVD). Mg(2+) contacts are provided by Asp-339, Asp-341, and Asp-431. 446 to 447 (GW) is a binding site for a 2'-deoxyribonucleoside 5'-triphosphate.

The protein belongs to the DNA polymerase type-X family. It depends on Mg(2+) as a cofactor. Found in the thymus and not in the spleen, kidney, intestine, or liver.

The protein localises to the nucleus. It carries out the reaction DNA(n) + a 2'-deoxyribonucleoside 5'-triphosphate = DNA(n+1) + diphosphate. In terms of biological role, template-independent DNA polymerase which catalyzes the random addition of deoxynucleoside 5'-triphosphate to the 3'-end of a DNA initiator. One of the in vivo functions of this enzyme is the addition of nucleotides at the junction (N region) of rearranged Ig heavy chain and T-cell receptor gene segments during the maturation of B- and T-cells. The polypeptide is DNA nucleotidylexotransferase (dntt) (Xenopus laevis (African clawed frog)).